A 77-amino-acid chain; its full sequence is Sec-independent protein translocase protein TatA (77 aa).

Residues 1 to 21 (MGSLSIWHWIVVIAVVLLLFG) form a helical membrane-spanning segment. The segment covering 43-60 (MQDDDKAPEKTEPVKSID) has biased composition (basic and acidic residues). The interval 43–77 (MQDDDKAPEKTEPVKSIDHGATPSATRTDVGSKAV) is disordered.

This sequence belongs to the TatA/E family. The Tat system comprises two distinct complexes: a TatABC complex, containing multiple copies of TatA, TatB and TatC subunits, and a separate TatA complex, containing only TatA subunits. Substrates initially bind to the TatABC complex, which probably triggers association of the separate TatA complex to form the active translocon.

Its subcellular location is the cell inner membrane. Its function is as follows. Part of the twin-arginine translocation (Tat) system that transports large folded proteins containing a characteristic twin-arginine motif in their signal peptide across membranes. TatA could form the protein-conducting channel of the Tat system. This chain is Sec-independent protein translocase protein TatA, found in Bradyrhizobium sp. (strain BTAi1 / ATCC BAA-1182).